The following is a 510-amino-acid chain: Protein phosphatase 1H (510 aa).

The 431-residue stretch at 73-503 (STGYAEVINA…DDISVYVIPL (431 aa)) folds into the PPM-type phosphatase domain. Disordered stretches follow at residues 105–128 (VQSTPNKNSSSKRRSSLPNAEGLQ) and 188–225 (LGEEPESTSSNSRTLTRAASLRGGSGAPGSPSTPPTRF).

This sequence belongs to the PP2C family.

It is found in the nucleus. The protein resides in the cytoplasm. The enzyme catalyses O-phospho-L-seryl-[protein] + H2O = L-seryl-[protein] + phosphate. The catalysed reaction is O-phospho-L-threonyl-[protein] + H2O = L-threonyl-[protein] + phosphate. The sequence is that of Protein phosphatase 1H (ppm1h) from Xenopus tropicalis (Western clawed frog).